A 642-amino-acid chain; its full sequence is Hemagglutinin-esterase-fusion glycoprotein (642 aa).

Residue Ala-1 is a signal peptide. The interval 2–27 (EKIKICLQKQVNSSFSLHNGFGGNLY) is fusion domain-1. The Extracellular segment spans residues 2–617 (EKIKICLQKQ…QSDPFYWGSS (616 aa)). 7 disulfide bridges follow: Cys-7/Cys-570, Cys-107/Cys-152, Cys-127/Cys-175, Cys-197/Cys-239, Cys-216/Cys-303, Cys-224/Cys-276, and Cys-333/Cys-339. N-linked (GlcNAc...) asparagine; by host glycosylation is found at Asn-13 and Asn-48. The segment at 28 to 138 (ATEEKRMFEL…RKNWTDIKLN (111 aa)) is esterase domain-1. The active-site Nucleophile is Ser-58. Asn-131 is a glycosylation site (N-linked (GlcNAc...) asparagine; by host). An N-acetyl-9-O-acetylneuraminic acid binding region spans residues 138–297 (NFQKSIYELA…VRSSPRFLLM (160 aa)). Residues 298-352 (PERSYCFDMKEKGLVTAVQSIWGKGRKSDYAVDQACLSTPGCMLIQKQKPYIGEA) are esterase domain-2. Active-site charge relay system residues include Asp-353 and His-356. The fusion domain-2 stretch occupies residues 353-638 (DDHHGDQEMR…AALVISGIAI (286 aa)). Asn-382 carries N-linked (GlcNAc...) asparagine; by host glycosylation. A helical transmembrane segment spans residues 618–638 (LGLAITTPISLAALVISGIAI). Residues 639–642 (CRTK) are Cytoplasmic-facing.

Belongs to the influenza type C/coronaviruses hemagglutinin-esterase family. As to quaternary structure, homotrimer of disulfide-linked HEF1-HEF2. In natural infection, inactive HEF is matured into HEF1 and HEF2 outside the cell by one or more trypsin-like, arginine-specific endoprotease.

Its subcellular location is the virion membrane. The protein localises to the host cell membrane. The catalysed reaction is N-acetyl-9-O-acetylneuraminate + H2O = N-acetylneuraminate + acetate + H(+). It carries out the reaction N-acetyl-4-O-acetylneuraminate + H2O = N-acetylneuraminate + acetate + H(+). Binds to the N-acetyl-9-O-acetylneuraminic acid residues on the cell surface, bringing about the attachment of the virus particle to the cell. Plays a major role in the determination of host range restriction and virulence. Class I viral fusion protein. Responsible for penetration of the virus into the cell cytoplasm by mediating the fusion of the membrane of the endocytosed virus particle with the endosomal membrane. Low pH in endosomes induce an irreversible conformational change in HEF2, releasing the fusion hydrophobic peptide. Several trimers are required to form a competent fusion pore. Displays a receptor-destroying activity which is a neuraminidate-O-acetyl esterase. This activity cleaves off any receptor on the cell surface, which would otherwise prevent virions release. These cleavages prevent self-aggregation and ensure the efficient spread of the progeny virus from cell to cell. The polypeptide is Hemagglutinin-esterase-fusion glycoprotein (HE) (Influenza C virus (strain C/England/892/1983)).